A 509-amino-acid chain; its full sequence is MNEKQKQESGQVNPADKTSEKDYSKYFEAVYIPPSLKDAKKRGKESVQYHNDFKISEEFKGLGEGRKFYIRTYGCQMNEHDTEVMAGIFMALGYEATNSVDDANVILLNTCAIRENAENKVFGELGHLKALKKNNPDLILGVCGCMSQEESVVNRILKKHPFVDMIFGTHNIHRLPELLSEAYLSKEMVIEVWSKEGDVIENLPKVRNGKIKGWVNIMYGCDKFCTYCIVPYTRGKERSRRPEEIIQEVRRLASEGYKEITLLGQNVNAYGKDFEDMTYGLGDLMDELRKIDIPRIRFTTSHPRDFDDHLIEVLAKGGNLLDHIHLPVQSGSSAMLKMMARKYDRERYLELVGKIKAAMPNASLTTDIIVGFPNETDEQFEETLSLYREVEFDSAYTFIYSPREGTPAAKMKDNVPMRVKKERLQRLNDLVKEISAKKMKEYEGRTVEVLVEGESKNNPDILAGYTEKSKLVNFKGPKDAIGKIVRVKIEQAKTWSLDGVMAGEAIEVK.

A disordered region spans residues 1 to 20 (MNEKQKQESGQVNPADKTSE). The region spanning 66 to 184 (RKFYIRTYGC…LPELLSEAYL (119 aa)) is the MTTase N-terminal domain. Positions 75, 111, 145, 221, 225, and 228 each coordinate [4Fe-4S] cluster. Positions 207 to 437 (RNGKIKGWVN…NDLVKEISAK (231 aa)) constitute a Radical SAM core domain. One can recognise a TRAM domain in the interval 440–503 (KEYEGRTVEV…TWSLDGVMAG (64 aa)).

The protein belongs to the methylthiotransferase family. MiaB subfamily. In terms of assembly, monomer. The cofactor is [4Fe-4S] cluster.

The protein resides in the cytoplasm. The enzyme catalyses N(6)-dimethylallyladenosine(37) in tRNA + (sulfur carrier)-SH + AH2 + 2 S-adenosyl-L-methionine = 2-methylsulfanyl-N(6)-dimethylallyladenosine(37) in tRNA + (sulfur carrier)-H + 5'-deoxyadenosine + L-methionine + A + S-adenosyl-L-homocysteine + 2 H(+). Functionally, catalyzes the methylthiolation of N6-(dimethylallyl)adenosine (i(6)A), leading to the formation of 2-methylthio-N6-(dimethylallyl)adenosine (ms(2)i(6)A) at position 37 in tRNAs that read codons beginning with uridine. The sequence is that of tRNA-2-methylthio-N(6)-dimethylallyladenosine synthase from Bacillus velezensis (strain DSM 23117 / BGSC 10A6 / LMG 26770 / FZB42) (Bacillus amyloliquefaciens subsp. plantarum).